We begin with the raw amino-acid sequence, 191 residues long: Probable nicotinate-nucleotide adenylyltransferase (191 aa).

The protein belongs to the NadD family.

It carries out the reaction nicotinate beta-D-ribonucleotide + ATP + H(+) = deamido-NAD(+) + diphosphate. The protein operates within cofactor biosynthesis; NAD(+) biosynthesis; deamido-NAD(+) from nicotinate D-ribonucleotide: step 1/1. Its function is as follows. Catalyzes the reversible adenylation of nicotinate mononucleotide (NaMN) to nicotinic acid adenine dinucleotide (NaAD). The sequence is that of Probable nicotinate-nucleotide adenylyltransferase from Staphylococcus epidermidis (strain ATCC 12228 / FDA PCI 1200).